The primary structure comprises 310 residues: Methionyl-tRNA formyltransferase (310 aa).

(6S)-5,6,7,8-tetrahydrofolate is bound at residue 109–112; the sequence is SLLP.

This sequence belongs to the Fmt family.

The enzyme catalyses L-methionyl-tRNA(fMet) + (6R)-10-formyltetrahydrofolate = N-formyl-L-methionyl-tRNA(fMet) + (6S)-5,6,7,8-tetrahydrofolate + H(+). In terms of biological role, attaches a formyl group to the free amino group of methionyl-tRNA(fMet). The formyl group appears to play a dual role in the initiator identity of N-formylmethionyl-tRNA by promoting its recognition by IF2 and preventing the misappropriation of this tRNA by the elongation apparatus. This is Methionyl-tRNA formyltransferase from Macrococcus caseolyticus (strain JCSC5402) (Macrococcoides caseolyticum).